A 234-amino-acid polypeptide reads, in one-letter code: Probable septum site-determining protein MinC (234 aa).

The protein belongs to the MinC family. In terms of assembly, interacts with MinD and FtsZ.

Functionally, cell division inhibitor that blocks the formation of polar Z ring septums. Rapidly oscillates between the poles of the cell to destabilize FtsZ filaments that have formed before they mature into polar Z rings. Prevents FtsZ polymerization. The chain is Probable septum site-determining protein MinC from Buchnera aphidicola subsp. Baizongia pistaciae (strain Bp).